The following is a 241-amino-acid chain: Tetraspanin-1 (241 aa).

Topologically, residues 1 to 11 (MQCFSFIKTMM) are cytoplasmic. A helical transmembrane segment spans residues 12 to 32 (ILFNLLIFLCGAALLAVGIWV). Topologically, residues 33 to 52 (SIDGASFLKIFGPLSSSAMQ) are extracellular. A helical transmembrane segment spans residues 53 to 73 (FVNVGYFLIAAGVVVFALGFL). At 74–88 (GCYGAKTESKCALVT) the chain is on the cytoplasmic side. The chain crosses the membrane as a helical span at residues 89-109 (FFFILLLIFIAEVAAAVVALV). At 110–211 (YTTMAEHFLT…NQLLYDIRTN (102 aa)) the chain is on the extracellular side. 4 N-linked (GlcNAc...) asparagine glycosylation sites follow: N141, N154, N178, and N184. Residues 212-232 (AVTVGGVAAGIGGLELAAMIV) form a helical membrane-spanning segment. Residues 233-241 (SMYLYCNLQ) lie on the Cytoplasmic side of the membrane.

It belongs to the tetraspanin (TM4SF) family. In terms of assembly, interacts with SLC19A2. Interacts with NTRK1/TRKA.

It is found in the cell membrane. The protein resides in the lysosome membrane. Structural component of specialized membrane microdomains known as tetraspanin-enriched microdomains (TERMs), which act as platforms for receptor clustering and signaling. Participates thereby in diverse biological functions such as cell signal transduction, adhesion, migration and protein trafficking. Regulates neuronal differentiation in response to NGF by facilitating NGF-mediated activation of NTRK1/TRKA receptor tyrosine kinase and subsequent downstream signaling pathways. Plays a role in the inhibition of TNFalpha-induced apoptosis. Mechanistically, inhibits the NF-kappa-B signaling pathway by blocking phosphorylation of CHUK. Also promotes the stability of the thiamine transporter 1/SLC19A2 in intestinal epithelial cells leading to an increase of thiamine uptake process. The chain is Tetraspanin-1 (TSPAN1) from Homo sapiens (Human).